A 104-amino-acid chain; its full sequence is Circadian clock oscillator protein KaiB (104 aa).

Belongs to the KaiB family. In terms of assembly, the KaiABC complex composition changes during the circadian cycle to control KaiC phosphorylation. Complexes KaiC(6), KaiA(2-4):KaiC(6), KaiB(6):KaiC(6) and KaiC(6):KaiB(6):KaiA(12) are among the most important forms, many form cooperatively. Undergoes a major conformational rearrangment; in the free state forms homotetramers as a dimer of dimers. When bound to the CI domain of KaiC switches to a monomeric thioredoxin-fold (KaiB(fs)). KaiB(fs) binds CikA, leading it to dephosphorylate phospho-RpaA.

Key component of the KaiABC oscillator complex, which constitutes the main circadian regulator in cyanobacteria. Complex composition changes during the circadian cycle to control KaiC phosphorylation. KaiA stimulates KaiC autophosphorylation, while KaiB sequesters KaiA, leading to KaiC autodephosphorylation. Phospho-Ser-431 KaiC accumulation triggers binding of KaiB to form the KaiB(6):KaiC(6) complex, leading to changes in output regulators CikA and SasA. KaiB switches to a thioredoxin-like fold (KaiB(fs)) when bound to KaiC. KaiB(6):KaiC(6) formation exposes a site for KaiA binding that sequesters KaiA from KaiC, making the KaiC(6):KaiB(6):KaiA(12) complex that results in KaiC autodephosphorylation. In terms of biological role, a metamorphic protein which reversibly switches between an inactive tetrameric fold and a rare, thioredoxin-like monomeric fold (KaiB(fs)). KaiB(fs) binds phospho-KaiC, KaiA and CikA. KaiA and CikA compete for binding to KaiB(fs), and KaiB(fs) and SasA compete for binding to KaiC, thus the clock oscillator and output signal pathway are tightly coupled. In Parasynechococcus marenigrum (strain WH8102), this protein is Circadian clock oscillator protein KaiB.